The following is a 427-amino-acid chain: Probable anaerobic glycerol-3-phosphate dehydrogenase subunit B (427 aa).

It belongs to the anaerobic G-3-P dehydrogenase subunit B family. The cofactor is FMN.

It carries out the reaction a quinone + sn-glycerol 3-phosphate = dihydroxyacetone phosphate + a quinol. It functions in the pathway polyol metabolism; glycerol degradation via glycerol kinase pathway; glycerone phosphate from sn-glycerol 3-phosphate (anaerobic route): step 1/1. This chain is Probable anaerobic glycerol-3-phosphate dehydrogenase subunit B, found in Halobacterium salinarum (strain ATCC 29341 / DSM 671 / R1).